The following is a 143-amino-acid chain: Spore coat protein P (143 aa).

The sHSP domain maps to 34-143 (FFDSEASTFV…VETVAFNKGL (110 aa)).

This sequence belongs to the small heat shock protein (HSP20) family.

This Bacillus subtilis (strain 168) protein is Spore coat protein P (cotP).